The following is a 201-amino-acid chain: Large ribosomal subunit protein uL4 (201 aa).

The segment at 46–71 is disordered; it reads QKTRAEITGTGKKPWRQKGTGRARAG.

It belongs to the universal ribosomal protein uL4 family. As to quaternary structure, part of the 50S ribosomal subunit.

Its function is as follows. One of the primary rRNA binding proteins, this protein initially binds near the 5'-end of the 23S rRNA. It is important during the early stages of 50S assembly. It makes multiple contacts with different domains of the 23S rRNA in the assembled 50S subunit and ribosome. In terms of biological role, forms part of the polypeptide exit tunnel. This chain is Large ribosomal subunit protein uL4, found in Shewanella amazonensis (strain ATCC BAA-1098 / SB2B).